We begin with the raw amino-acid sequence, 596 residues long: Phosphoenolpyruvate carboxykinase [GTP] (596 aa).

Substrate is bound by residues R77 and 205–207; that span reads YGG. Residues K214 and H234 each contribute to the Mn(2+) site. S256 is a substrate binding site. 257-262 provides a ligand contact to GTP; it reads ACGKTN. C258 is a catalytic residue. Residue D283 participates in Mn(2+) binding. The disordered stretch occupies residues 362–388; the sequence is KKGSTEKAAHPNSRFTAPAKNNPAISP. Substrate is bound at residue 373–375; it reads NSR. GTP contacts are provided by residues R375, R406, and 499–502; that span reads YGDN.

Belongs to the phosphoenolpyruvate carboxykinase [GTP] family. In terms of assembly, monomer. The cofactor is Mn(2+).

It is found in the cytoplasm. The catalysed reaction is oxaloacetate + GTP = phosphoenolpyruvate + GDP + CO2. It functions in the pathway carbohydrate biosynthesis; gluconeogenesis. Functionally, catalyzes the conversion of oxaloacetate (OAA) to phosphoenolpyruvate (PEP), the rate-limiting step in the metabolic pathway that produces glucose from lactate and other precursors derived from the citric acid cycle. This Anaeromyxobacter sp. (strain K) protein is Phosphoenolpyruvate carboxykinase [GTP].